The chain runs to 319 residues: Acetyl-coenzyme A carboxylase carboxyl transferase subunit alpha (319 aa).

In terms of domain architecture, CoA carboxyltransferase C-terminal spans 35-296 (NIDEEVHRLR…KAQLLEDLAD (262 aa)).

It belongs to the AccA family. As to quaternary structure, acetyl-CoA carboxylase is a heterohexamer composed of biotin carboxyl carrier protein (AccB), biotin carboxylase (AccC) and two subunits each of ACCase subunit alpha (AccA) and ACCase subunit beta (AccD).

It localises to the cytoplasm. The catalysed reaction is N(6)-carboxybiotinyl-L-lysyl-[protein] + acetyl-CoA = N(6)-biotinyl-L-lysyl-[protein] + malonyl-CoA. It participates in lipid metabolism; malonyl-CoA biosynthesis; malonyl-CoA from acetyl-CoA: step 1/1. In terms of biological role, component of the acetyl coenzyme A carboxylase (ACC) complex. First, biotin carboxylase catalyzes the carboxylation of biotin on its carrier protein (BCCP) and then the CO(2) group is transferred by the carboxyltransferase to acetyl-CoA to form malonyl-CoA. This is Acetyl-coenzyme A carboxylase carboxyl transferase subunit alpha from Salmonella dublin (strain CT_02021853).